A 105-amino-acid chain; its full sequence is Met repressor (105 aa).

Belongs to the MetJ family. Homodimer.

It is found in the cytoplasm. In terms of biological role, this regulatory protein, when combined with SAM (S-adenosylmethionine) represses the expression of the methionine regulon and of enzymes involved in SAM synthesis. The chain is Met repressor from Yersinia pestis bv. Antiqua (strain Antiqua).